Reading from the N-terminus, the 1690-residue chain is DNA-directed RNA polymerase subunit beta' (1690 aa).

Zn(2+)-binding residues include cysteine 63, cysteine 65, cysteine 78, and cysteine 81. Positions 753, 755, and 757 each coordinate Mg(2+). Zn(2+) contacts are provided by cysteine 1107, cysteine 1295, cysteine 1302, and cysteine 1305.

It belongs to the RNA polymerase beta' chain family. As to quaternary structure, the RNAP catalytic core consists of 2 alpha, 1 beta, 1 beta' and 1 omega subunit. When a sigma factor is associated with the core the holoenzyme is formed, which can initiate transcription. Mg(2+) serves as cofactor. It depends on Zn(2+) as a cofactor.

It catalyses the reaction RNA(n) + a ribonucleoside 5'-triphosphate = RNA(n+1) + diphosphate. Its function is as follows. DNA-dependent RNA polymerase catalyzes the transcription of DNA into RNA using the four ribonucleoside triphosphates as substrates. The chain is DNA-directed RNA polymerase subunit beta' from Thermotoga petrophila (strain ATCC BAA-488 / DSM 13995 / JCM 10881 / RKU-1).